The primary structure comprises 245 residues: Eukaryotic translation initiation factor 4E type 2 (245 aa).

The span at 1 to 38 (MNNKFDALKDDDSGDHDQNEENSTQKDGEKEKTDRDKS) shows a compositional bias: basic and acidic residues. The interval 1–52 (MNNKFDALKDDDSGDHDQNEENSTQKDGEKEKTDRDKSQSSGKRKAVVPGPA) is disordered. The residue at position 13 (Ser13) is a Phosphoserine. The EIF4EBP1/2/3 binding stretch occupies residues 54–57 (HPLQ). 78–79 (YE) contacts mRNA. The interval 95–99 (WKFYS) is EIF4EBP1/2/3 binding. Residues His110 and 124–125 (WE) each bind mRNA. An N6-acetyllysine; alternate modification is found at Lys134. Lys134 participates in a covalent cross-link: Glycyl lysine isopeptide (Lys-Gly) (interchain with G-Cter in ISG15); alternate. The tract at residues 150–157 (NLILAMLG) is EIF4EBP1/2/3 binding. MRNA-binding positions include 174–179 (RFQEDI) and 222–224 (KMP). A Glycyl lysine isopeptide (Lys-Gly) (interchain with G-Cter in ISG15) cross-link involves residue Lys222.

The protein belongs to the eukaryotic initiation factor 4E family. As to quaternary structure, interacts with EIF4EBP1, EIF4EBP2 and EIF4EBP3. Does not interact with eIF4G (EIF4G1, EIF4G2 or EIF4G3). Component of the 4EHP-GYF2 complex, at least composed of EIF4E2, GIGYF2 and ZNF598. Interacts with GIGYF2 (via the 4EHP-binding motif); the interaction is direct. Interacts with EIF4ENIF1/4E-T (via YXXXXLphi motif); increasing affinity for the 7-methylguanosine-containing mRNA cap. In terms of processing, ubiquitinated by ARIH1. The consequences of ubiquitination are however unclear: according to a report, EIF4E2 ubiquitination leads to promote EIF4E2 cap-binding and protein translation arrest. According to another report ubiquitination leads to its subsequent degradation. ISGylation enhances its cap structure-binding activity and translation-inhibition activity. In terms of tissue distribution, widely expressed with highest levels in testis, kidney and liver.

It localises to the cytoplasm. The protein resides in the P-body. Functionally, recognizes and binds the 7-methylguanosine-containing mRNA cap during an early step in the initiation. Acts as a repressor of translation initiation. In contrast to EIF4E, it is unable to bind eIF4G (EIF4G1, EIF4G2 or EIF4G3), suggesting that it acts by competing with EIF4E and block assembly of eIF4F at the cap. In P-bodies, component of a complex that promotes miRNA-mediated translational repression. Involved in virus-induced host response by mediating miRNA MIR34A-induced translational silencing which controls IFNB1 production by a negative feedback mechanism. Its function is as follows. Component of the 4EHP-GYF2 complex, a multiprotein complex that acts as a repressor of translation initiation. In association with GIGYF2, assists ribosome-associated quality control (RQC) by sequestering the mRNA cap, blocking ribosome initiation and decreasing the translational load on problematic messages. Part of a pathway that works in parallel to RQC-mediated degradation of the stalled nascent polypeptide. GIGYF2 and EIF4E2 work downstream and independently of ZNF598, which seems to work as a scaffold that can recruit them to faulty mRNA even if alternative recruitment mechanisms may exist. The chain is Eukaryotic translation initiation factor 4E type 2 from Mus musculus (Mouse).